Consider the following 494-residue polypeptide: Putative NAD kinase 3 (494 aa).

It belongs to the NAD kinase family.

The catalysed reaction is NAD(+) + ATP = ADP + NADP(+) + H(+). The polypeptide is Putative NAD kinase 3 (Oryza sativa subsp. japonica (Rice)).